The sequence spans 68 residues: Small integral membrane protein 45 (68 aa).

The helical transmembrane segment at 7 to 27 (WFVPVYLVISVLILVGFGACI) threads the bilayer.

Highly expressed in brain.

The protein localises to the nucleus. The protein resides in the cytoplasm. It localises to the membrane. In terms of biological role, plays a role in the regulation of neuron maturation. The chain is Small integral membrane protein 45 from Homo sapiens (Human).